Here is a 194-residue protein sequence, read N- to C-terminus: MIGLRPAFSTMLFLLLLTGGVYPLLTTALGQWWFPWQANGSLIHKDNVIRGSALIGQSFTAAGYFHGRPSATADTPYNPLASGGSNLAASNPELDAQIQARVAALRAANPQASSAVPVELATASASGLDNNLTPGAAAWQIPRVAAARQLPVEQVAQLVAEYTHRPLASFLGQPVVNIVELNLALDALQGHRAK.

The chain crosses the membrane as a helical span at residues 12-34 (LFLLLLTGGVYPLLTTALGQWWF).

It belongs to the KdpC family. As to quaternary structure, the system is composed of three essential subunits: KdpA, KdpB and KdpC.

It is found in the cell inner membrane. Functionally, part of the high-affinity ATP-driven potassium transport (or Kdp) system, which catalyzes the hydrolysis of ATP coupled with the electrogenic transport of potassium into the cytoplasm. This subunit acts as a catalytic chaperone that increases the ATP-binding affinity of the ATP-hydrolyzing subunit KdpB by the formation of a transient KdpB/KdpC/ATP ternary complex. In Salmonella heidelberg (strain SL476), this protein is Potassium-transporting ATPase KdpC subunit.